Reading from the N-terminus, the 342-residue chain is N-acetyl-gamma-glutamyl-phosphate reductase (342 aa).

Residue Cys149 is part of the active site.

It belongs to the NAGSA dehydrogenase family. Type 1 subfamily.

The protein localises to the cytoplasm. It carries out the reaction N-acetyl-L-glutamate 5-semialdehyde + phosphate + NADP(+) = N-acetyl-L-glutamyl 5-phosphate + NADPH + H(+). Its pathway is amino-acid biosynthesis; L-arginine biosynthesis; N(2)-acetyl-L-ornithine from L-glutamate: step 3/4. Catalyzes the NADPH-dependent reduction of N-acetyl-5-glutamyl phosphate to yield N-acetyl-L-glutamate 5-semialdehyde. The sequence is that of N-acetyl-gamma-glutamyl-phosphate reductase from Roseobacter denitrificans (strain ATCC 33942 / OCh 114) (Erythrobacter sp. (strain OCh 114)).